The chain runs to 66 residues: Large ribosomal subunit protein bL35 (66 aa).

It belongs to the bacterial ribosomal protein bL35 family.

In Thermodesulfovibrio yellowstonii (strain ATCC 51303 / DSM 11347 / YP87), this protein is Large ribosomal subunit protein bL35.